A 418-amino-acid polypeptide reads, in one-letter code: Putative competence-damage inducible protein (418 aa).

It belongs to the CinA family.

This chain is Putative competence-damage inducible protein, found in Streptococcus pneumoniae serotype 19F (strain G54).